The chain runs to 613 residues: tRNA 5-methylaminomethyl-2-thiouridine biosynthesis bifunctional protein MnmC (613 aa).

The segment at 1-225 (MKKAKLIFKD…KREMIKAYLE (225 aa)) is tRNA (mnm(5)s(2)U34)-methyltransferase. The tract at residues 252 to 613 (IGAGISSAVL…FLVRKLKKGL (362 aa)) is FAD-dependent cmnm(5)s(2)U34 oxidoreductase.

This sequence in the N-terminal section; belongs to the methyltransferase superfamily. tRNA (mnm(5)s(2)U34)-methyltransferase family. In the C-terminal section; belongs to the DAO family. FAD serves as cofactor.

It is found in the cytoplasm. It catalyses the reaction 5-aminomethyl-2-thiouridine(34) in tRNA + S-adenosyl-L-methionine = 5-methylaminomethyl-2-thiouridine(34) in tRNA + S-adenosyl-L-homocysteine + H(+). In terms of biological role, catalyzes the last two steps in the biosynthesis of 5-methylaminomethyl-2-thiouridine (mnm(5)s(2)U) at the wobble position (U34) in tRNA. Catalyzes the FAD-dependent demodification of cmnm(5)s(2)U34 to nm(5)s(2)U34, followed by the transfer of a methyl group from S-adenosyl-L-methionine to nm(5)s(2)U34, to form mnm(5)s(2)U34. The sequence is that of tRNA 5-methylaminomethyl-2-thiouridine biosynthesis bifunctional protein MnmC from Campylobacter jejuni subsp. doylei (strain ATCC BAA-1458 / RM4099 / 269.97).